Here is a 324-residue protein sequence, read N- to C-terminus: Ribonucleoside-diphosphate reductase subunit beta nrdF2 (324 aa).

Fe cation is bound by residues glutamate 103 and histidine 106. Tyrosine 110 is an active-site residue. Residues glutamate 163, glutamate 197, and histidine 200 each contribute to the Fe cation site.

Belongs to the ribonucleoside diphosphate reductase small chain family. Tetramer of two alpha and two beta subunits. The cofactor is Fe cation.

It carries out the reaction a 2'-deoxyribonucleoside 5'-diphosphate + [thioredoxin]-disulfide + H2O = a ribonucleoside 5'-diphosphate + [thioredoxin]-dithiol. In terms of biological role, provides the precursors necessary for DNA synthesis. Catalyzes the biosynthesis of deoxyribonucleotides from the corresponding ribonucleotides. The polypeptide is Ribonucleoside-diphosphate reductase subunit beta nrdF2 (nrdF2) (Mycobacterium tuberculosis (strain CDC 1551 / Oshkosh)).